The following is a 147-amino-acid chain: Putative nickel-responsive regulator (147 aa).

Histidine 76, histidine 87, histidine 89, and cysteine 95 together coordinate Ni(2+).

This sequence belongs to the transcriptional regulatory CopG/NikR family. The cofactor is Ni(2+).

In terms of biological role, transcriptional regulator. The chain is Putative nickel-responsive regulator from Rhodopseudomonas palustris (strain TIE-1).